Reading from the N-terminus, the 597-residue chain is uncharacterized protein (597 aa).

The 63-residue stretch at 16 to 78 folds into the PWWP domain; it reads VGRLVWVRRR…LENSKTVKAF (63 aa). 2 disordered regions span residues 126–210 and 449–482; these read NLCN…MRGL and QLKGKRNSRQMSKKQEERRNVYGEEANNNSSTPH. Over residues 134–143 the composition is skewed to basic and acidic residues; the sequence is EDSKRCLSGK. The span at 144–161 shows a compositional bias: acidic residues; it reads EDEDSGSSDAEETEDDEL. A compositionally biased stretch (polar residues) spans 166-185; the sequence is EQLQSSISSQEMNNVGASKV. The span at 450–460 shows a compositional bias: basic residues; it reads LKGKRNSRQMS. The span at 461-470 shows a compositional bias: basic and acidic residues; sequence KKQEERRNVY.

This is an uncharacterized protein from Arabidopsis thaliana (Mouse-ear cress).